Reading from the N-terminus, the 547-residue chain is MAEKPATVNAELVKEMDAAPKKYPYSLDSEGKANYCPVWRFTQPHMMAFHLSWICFFMSFVATFAPASLAPIIRDDLFLTKSQLGNAGVAAVCGAIAARIFMGIVVDSIGPRYGAAATMLMTAPAVFCMALVTDFSTFACVRFFIGLSLCMFVCCQFWCGTMFNVKIVGTANAIAAGWGNMGGGACHFIMPLIYQGIKDGGVPGYQAWRWAFFVPGGIYILTATLTLLLGIDHPSGKDYRDLKKEGTLKAKGAMWPVVKCGLGNYRSWILALTYGYSFGVELTVDNVIVEYLFDQFGLNLAVAGALGAIFGLMNLFTRATGGMISDLVAKPFGMRGRIWALWIIQTLGGIFCIVLGKVSNSLSSTIVIMIVFSIFCQQACGLHFGITPFVSRRAYGVVSGLVGAGGNTGAAITQAIWFAGTAPWQLTLSKADGFVYMGIMTIGLTLPLFFIWFPMWGSMLTGPREGAEEEDYYMREWSAEEVASGLHQGSMRFAMESKSQRGTRDKRAAGPARVPQQLRLGARCCQARGGLIRCVLAQSLGATGCSD.

12 consecutive transmembrane segments (helical) span residues 53-73 (WICFFMSFVATFAPASLAPII), 86-106 (NAGVAAVCGAIAARIFMGIVV), 113-133 (YGAAATMLMTAPAVFCMALVT), 143-163 (FFIGLSLCMFVCCQFWCGTMF), 173-193 (AIAAGWGNMGGGACHFIMPLI), 211-231 (AFFVPGGIYILTATLTLLLGI), 262-280 (LGNYRSWILALTYGYSFGV), 296-316 (FGLNLAVAGALGAIFGLMNLF), 338-358 (IWALWIIQTLGGIFCIVLGKV), 366-386 (IVIMIVFSIFCQQACGLHFGI), 400-420 (GLVGAGGNTGAAITQAIWFAG), and 433-453 (GFVYMGIMTIGLTLPLFFIWF).

The protein belongs to the major facilitator superfamily. Nitrate/nitrite porter (TC 2.A.1.8) family.

It is found in the cell membrane. Nitrite transport mediated by system 1 is very sensitive to inhibition by nitrate. In terms of biological role, involved in nitrate transport, but does not seem to be able to mediate transport by its own. Acts as a dual component transporter with NAR2 (system 1). Imports nitrate with high affinity when expressed with NAR2 in a heterologous system (Xenopus oocytes). Involved in a high affinity and a high capacity transport specific for both nitrate and nitrite. The chain is Nitrate transporter 2.1 from Chlamydomonas reinhardtii (Chlamydomonas smithii).